A 160-amino-acid chain; its full sequence is MSAPRKTRLYAILAVVCGAVLTIALMLYALSSNIDLFYTPSEILYGKNETQEKPAIGQRLRVGGMVMPGSVRRDSQSLEVRFTVYDAKGSVDVTYNGMLPDLFREGQGVVAQGILDTDDHIAAKEVLARHDENYTPPEIKAAMEGQNGHAPAAGPEGKRL.

At 1–8 the chain is on the cytoplasmic side; sequence MSAPRKTR. The chain crosses the membrane as a helical; Signal-anchor for type II membrane protein span at residues 9-29; the sequence is LYAILAVVCGAVLTIALMLYA. Topologically, residues 30-160 are periplasmic; it reads LSSNIDLFYT…PAAGPEGKRL (131 aa). Residues histidine 130 and tyrosine 134 each contribute to the heme site.

This sequence belongs to the CcmE/CycJ family.

Its subcellular location is the cell inner membrane. In terms of biological role, heme chaperone required for the biogenesis of c-type cytochromes. Transiently binds heme delivered by CcmC and transfers the heme to apo-cytochromes in a process facilitated by CcmF and CcmH. The sequence is that of Cytochrome c-type biogenesis protein CcmE from Pectobacterium atrosepticum (strain SCRI 1043 / ATCC BAA-672) (Erwinia carotovora subsp. atroseptica).